Reading from the N-terminus, the 128-residue chain is Large ribosomal subunit protein bL12 (128 aa).

Belongs to the bacterial ribosomal protein bL12 family. Homodimer. Part of the ribosomal stalk of the 50S ribosomal subunit. Forms a multimeric L10(L12)X complex, where L10 forms an elongated spine to which 2 to 4 L12 dimers bind in a sequential fashion. Binds GTP-bound translation factors.

In terms of biological role, forms part of the ribosomal stalk which helps the ribosome interact with GTP-bound translation factors. Is thus essential for accurate translation. The chain is Large ribosomal subunit protein bL12 from Saccharopolyspora erythraea (strain ATCC 11635 / DSM 40517 / JCM 4748 / NBRC 13426 / NCIMB 8594 / NRRL 2338).